A 208-amino-acid chain; its full sequence is Small ribosomal subunit protein uS4 (208 aa).

One can recognise an S4 RNA-binding domain in the interval 98–161 (RRLDNVIYRL…KESPRIKELL (64 aa)).

Belongs to the universal ribosomal protein uS4 family. Part of the 30S ribosomal subunit. Contacts protein S5. The interaction surface between S4 and S5 is involved in control of translational fidelity.

One of the primary rRNA binding proteins, it binds directly to 16S rRNA where it nucleates assembly of the body of the 30S subunit. Its function is as follows. With S5 and S12 plays an important role in translational accuracy. The polypeptide is Small ribosomal subunit protein uS4 (Pelotomaculum thermopropionicum (strain DSM 13744 / JCM 10971 / SI)).